The primary structure comprises 383 residues: Polyketide synthase 4 (383 aa).

The active-site Nucleophile and monoketide coumarate intermediate is the cysteine 164.

It belongs to the thiolase-like superfamily. Chalcone/stilbene synthases family. As to quaternary structure, homodimer. Expressed in fruits.

The enzyme catalyses 4-coumaroyl-CoA + malonyl-CoA + H2O + H(+) = 4-hydroxybenzalacetone + 2 CO2 + 2 CoA. It carries out the reaction (E)-4-coumaroyl-CoA + 3 malonyl-CoA + 3 H(+) = 2',4,4',6'-tetrahydroxychalcone + 3 CO2 + 4 CoA. It participates in secondary metabolite biosynthesis; flavonoid biosynthesis. With respect to regulation, inhibited by glutathione. Its function is as follows. Bifunctional polyketide synthase producing both 4-hydroxybenzalacetone and naringenin chalcone. Can use p-coumaryl-CoA and ferulyl-CoA as substrates. Catalyzes the initial key reaction step in the biosynthesis of phenylbutanoids. The chain is Polyketide synthase 4 (PKS4) from Rubus idaeus (Raspberry).